The primary structure comprises 661 residues: Threonine--tRNA ligase (661 aa).

The TGS domain maps to Met1 to Arg64. Positions Asp245–Pro546 are catalytic. The Zn(2+) site is built by Cys341, His392, and His523.

This sequence belongs to the class-II aminoacyl-tRNA synthetase family. Homodimer. Zn(2+) serves as cofactor.

The protein resides in the cytoplasm. The enzyme catalyses tRNA(Thr) + L-threonine + ATP = L-threonyl-tRNA(Thr) + AMP + diphosphate + H(+). In terms of biological role, catalyzes the attachment of threonine to tRNA(Thr) in a two-step reaction: L-threonine is first activated by ATP to form Thr-AMP and then transferred to the acceptor end of tRNA(Thr). Also edits incorrectly charged L-seryl-tRNA(Thr). This Rhizobium johnstonii (strain DSM 114642 / LMG 32736 / 3841) (Rhizobium leguminosarum bv. viciae) protein is Threonine--tRNA ligase.